The sequence spans 430 residues: Delta(14)-sterol reductase (430 aa).

6 helical membrane passes run 12–32 (IGTGVLMLILPPISHYLHFLI), 67–87 (LAVAAYYLLLVALMYVLPAEI), 109–129 (FLVFFTFLGTMTVLEGPTWWF), 230–250 (FVSDSIVLVNLFETWYVVDAL), 267–287 (LGVMLLFGNAVWVPFMYCLQA), and 290–310 (LASFPVHLGLLGIAGVLAVQF). Residues lysine 323, arginine 327, leucine 350, tryptophan 355, and 362 to 363 (NY) each bind NADP(+). 2 helical membrane passes run 349 to 369 (LLISGWWGVARHVNYFGDWIM) and 376 to 396 (TTGFNTPLTYFYVIYFGILLL). NADP(+) is bound by residues aspartate 402, 406-410 (CREKY), and tyrosine 417.

Belongs to the ERG4/ERG24 family.

It is found in the membrane. The enzyme catalyses 4,4-dimethyl-5alpha-cholesta-8,24-dien-3beta-ol + NADP(+) = 4,4-dimethyl-5alpha-cholesta-8,14,24-trien-3beta-ol + NADPH + H(+). Its pathway is steroid biosynthesis; zymosterol biosynthesis; zymosterol from lanosterol: step 2/6. In terms of biological role, reduces the C14=C15 double bond of 4,4-dimethyl-cholesta-8,14,24-trienol to produce 4,4-dimethyl-cholesta-8,24-dienol. The sequence is that of Delta(14)-sterol reductase (ERG3) from Ascobolus immersus.